The primary structure comprises 542 residues: Chaperonin GroEL (542 aa).

Residues 29–32 (TLGP), 86–90 (DGTTT), Gly414, and Asp491 contribute to the ATP site.

It belongs to the chaperonin (HSP60) family. Forms a cylinder of 14 subunits composed of two heptameric rings stacked back-to-back. Interacts with the co-chaperonin GroES.

The protein resides in the cytoplasm. The enzyme catalyses ATP + H2O + a folded polypeptide = ADP + phosphate + an unfolded polypeptide.. Functionally, together with its co-chaperonin GroES, plays an essential role in assisting protein folding. The GroEL-GroES system forms a nano-cage that allows encapsulation of the non-native substrate proteins and provides a physical environment optimized to promote and accelerate protein folding. This Desulforamulus reducens (strain ATCC BAA-1160 / DSM 100696 / MI-1) (Desulfotomaculum reducens) protein is Chaperonin GroEL.